We begin with the raw amino-acid sequence, 211 residues long: N-(5'-phosphoribosyl)anthranilate isomerase (211 aa).

It belongs to the TrpF family.

The catalysed reaction is N-(5-phospho-beta-D-ribosyl)anthranilate = 1-(2-carboxyphenylamino)-1-deoxy-D-ribulose 5-phosphate. Its pathway is amino-acid biosynthesis; L-tryptophan biosynthesis; L-tryptophan from chorismate: step 3/5. This is N-(5'-phosphoribosyl)anthranilate isomerase from Methanococcus maripaludis (strain C6 / ATCC BAA-1332).